The chain runs to 166 residues: Chemoreceptor glutamine deamidase CheD (166 aa).

The protein belongs to the CheD family. In terms of assembly, forms a complex with CheC.

It carries out the reaction L-glutaminyl-[protein] + H2O = L-glutamyl-[protein] + NH4(+). Deamidates glutamine residues to glutamate on methyl-accepting chemotaxis receptors (MCPs). CheD-mediated MCP deamidation is required for productive communication of the conformational signals of the chemoreceptors to the CheA kinase. The chain is Chemoreceptor glutamine deamidase CheD from Bacillus velezensis (strain DSM 23117 / BGSC 10A6 / LMG 26770 / FZB42) (Bacillus amyloliquefaciens subsp. plantarum).